The chain runs to 499 residues: MADTAITPTRSQNYPEWYQQVIVAADMAENSPVRGCMVIKPWGYAVWENMQGVLDRMFKDTGHVNAYFPLLIPLSFLEKEAAHVEGFAKECAVVTHHRLKGDGNGKLIPDGELEEPLIIRPTSETIIGHQFAKWVKSYRDLPILVNQWCNVMRWEMRTRMFLRTAEFLWQEGHTVHATAKEAQEETLQMLNVYSEFAEQYMAMPVIKGMKTPDERFPGAVDTYTIEALMQDKKALQAGTSHFLGQNFAKASEIKYLSAEGKEEFAWTTSWGVSTRLIGGLIMTHSDDNGFVVPPRLAPLHVVIIPIYRNDEERAQVLDYVKALEKDLKAQNYVGSSVRVKIDDRDMRGGEKAWQYIKQGVPVRVEVGPRDMAKGEVFVGRRDRGPKEKASMERNAFVANITNLLQEMQDGLFERAKQMRDESIKTITNLQDFEKYFSGGENTAPGFAKVPWCEAGMGHELLAQLKVTPRCMPLDQEPVQGNCIFSGKPATKWVLFAKSY.

Belongs to the class-II aminoacyl-tRNA synthetase family. ProS type 3 subfamily. As to quaternary structure, homodimer.

Its subcellular location is the cytoplasm. It carries out the reaction tRNA(Pro) + L-proline + ATP = L-prolyl-tRNA(Pro) + AMP + diphosphate. Its function is as follows. Catalyzes the attachment of proline to tRNA(Pro) in a two-step reaction: proline is first activated by ATP to form Pro-AMP and then transferred to the acceptor end of tRNA(Pro). This chain is Proline--tRNA ligase, found in Bdellovibrio bacteriovorus (strain ATCC 15356 / DSM 50701 / NCIMB 9529 / HD100).